A 312-amino-acid chain; its full sequence is Dihydroorotate dehydrogenase B (NAD(+)), catalytic subunit (312 aa).

FMN contacts are provided by residues Ser23 and 47–48 (KA). Residues Lys47 and 71 to 75 (NAIGL) contribute to the substrate site. Asn103 and Asn131 together coordinate FMN. Residue Asn131 coordinates substrate. Cys134 serves as the catalytic Nucleophile. FMN is bound by residues Lys171 and Ile197. 198–199 (NT) lines the substrate pocket. FMN-binding positions include Gly223, 249-250 (GG), and 271-272 (GT).

This sequence belongs to the dihydroorotate dehydrogenase family. Type 1 subfamily. Heterotetramer of 2 PyrK and 2 PyrD type B subunits. FMN is required as a cofactor.

The protein localises to the cytoplasm. It catalyses the reaction (S)-dihydroorotate + NAD(+) = orotate + NADH + H(+). It participates in pyrimidine metabolism; UMP biosynthesis via de novo pathway; orotate from (S)-dihydroorotate (NAD(+) route): step 1/1. Functionally, catalyzes the conversion of dihydroorotate to orotate with NAD(+) as electron acceptor. The polypeptide is Dihydroorotate dehydrogenase B (NAD(+)), catalytic subunit (pyrDB) (Streptococcus pneumoniae (strain ATCC BAA-255 / R6)).